Consider the following 156-residue polypeptide: Cell division protein SepF (156 aa).

Over residues 23-36 the composition is skewed to basic and acidic residues; that stretch reads SYEKEQTDMKKQQD. The tract at residues 23–49 is disordered; that stretch reads SYEKEQTDMKKQQDPPEQQDVTFPKAQ.

The protein belongs to the SepF family. In terms of assembly, homodimer. Interacts with FtsZ.

It is found in the cytoplasm. Functionally, cell division protein that is part of the divisome complex and is recruited early to the Z-ring. Probably stimulates Z-ring formation, perhaps through the cross-linking of FtsZ protofilaments. Its function overlaps with FtsA. This chain is Cell division protein SepF, found in Bacillus anthracis (strain CDC 684 / NRRL 3495).